A 596-amino-acid chain; its full sequence is Beta-fructofuranosidase, insoluble isoenzyme 6 (596 aa).

Positions 1–25 (MALAGLPLSVFAIAVHFCLVFSSSS) are cleaved as a signal peptide. Substrate-binding positions include 49–52 (WQND), Gln68, and Trp76. Asp52 is an active-site residue. Residue Asn80 is glycosylated (N-linked (GlcNAc...) asparagine). Residues 113-114 (AS), 177-178 (RD), and Glu232 each bind substrate. N-linked (GlcNAc...) asparagine glycosylation occurs at Asn335. An intrachain disulfide couples Cys436 to Cys482. Asn556 is a glycosylation site (N-linked (GlcNAc...) asparagine).

This sequence belongs to the glycosyl hydrolase 32 family. Expressed in roots. Weakly expressed in flowers.

It localises to the secreted. The protein resides in the extracellular space. Its subcellular location is the apoplast. It is found in the cell wall. It catalyses the reaction Hydrolysis of terminal non-reducing beta-D-fructofuranoside residues in beta-D-fructofuranosides.. This chain is Beta-fructofuranosidase, insoluble isoenzyme 6 (CIN6), found in Oryza sativa subsp. japonica (Rice).